We begin with the raw amino-acid sequence, 233 residues long: ATP-dependent Clp protease proteolytic subunit 1 (233 aa).

Ser-116 (nucleophile) is an active-site residue. The active site involves His-141.

The protein belongs to the peptidase S14 family. Fourteen ClpP subunits assemble into 2 heptameric rings which stack back to back to give a disk-like structure with a central cavity, resembling the structure of eukaryotic proteasomes.

It localises to the cytoplasm. The enzyme catalyses Hydrolysis of proteins to small peptides in the presence of ATP and magnesium. alpha-casein is the usual test substrate. In the absence of ATP, only oligopeptides shorter than five residues are hydrolyzed (such as succinyl-Leu-Tyr-|-NHMec, and Leu-Tyr-Leu-|-Tyr-Trp, in which cleavage of the -Tyr-|-Leu- and -Tyr-|-Trp bonds also occurs).. Functionally, cleaves peptides in various proteins in a process that requires ATP hydrolysis. Has a chymotrypsin-like activity. Plays a major role in the degradation of misfolded proteins. In Salinibacter ruber (strain DSM 13855 / M31), this protein is ATP-dependent Clp protease proteolytic subunit 1.